Consider the following 359-residue polypeptide: Mitochondrial glutathione transporter SLC25A39 (359 aa).

The Mitochondrial intermembrane segment spans residues Met1–Gln14. Solcar repeat units lie at residues Ile9–Phe151, Ser159–Trp243, and Thr253–Phe347. The chain crosses the membrane as a helical span at residues Met15–Val35. At Lys36–Arg121 the chain is on the mitochondrial matrix side. The [2Fe-2S] cluster site is built by Cys74, Cys78, Cys88, and Cys94. The helical transmembrane segment at Thr122–Phe142 threads the bilayer. Residues Thr143 to Pro164 lie on the Mitochondrial intermembrane side of the membrane. A helical membrane pass occupies residues Met165–Val185. Residues Arg186–Ser214 lie on the Mitochondrial matrix side of the membrane. The chain crosses the membrane as a helical span at residues Leu215–Phe235. At Asn236–Val255 the chain is on the mitochondrial intermembrane side. Residues Gly256–Phe276 traverse the membrane as a helical segment. At Asp277 to Arg317 the chain is on the mitochondrial matrix side. Residues Gly318–Ile338 traverse the membrane as a helical segment. Over Ser339 to Pro359 the chain is Mitochondrial intermembrane.

The protein belongs to the mitochondrial carrier (TC 2.A.29) family. Cleaved and degraded by AFG3L2; degradation by AFG3L2 is regulated by the ability of SLC25A39 to bind iron-sulfur. In absence of mitochondrial glutathione, SLC25A39 binds iron-sulfur, preventing cleavage and degradation by AFG3L2. The presence of mitochondrial glutathione prevents iron-sulfur-binding to SLC25A39, promoting cleavage and degradation by AFG3L2.

It is found in the mitochondrion inner membrane. The enzyme catalyses glutathione(in) = glutathione(out). The activity of SLC25A39 is regulated by levels of mitochondrial glutathione via its ability to bind [2Fe-2S] iron-sulfur cluster. Upon physiological levels of mitochondrial glutathione, glutathione prevents iron-sulfur-binding to SLC25A39 promoting cleavage and degradation by AFG3L2. Upon depletion of mitochondrial glutathione, SLC25A39 binds iron-sulfur, preventing cleavage and degradation by AFG3L2. Mitochondrial transporter required for glutathione import into mitochondria. Glutathione, which plays key roles in oxidative metabolism, is produced exclusively in the cytosol and is imported in many organelles. Mitochondrial glutathione is required for the activity and stability of proteins containing iron-sulfur clusters, as well as erythropoiesis. The polypeptide is Mitochondrial glutathione transporter SLC25A39 (SLC25A39) (Bos taurus (Bovine)).